Here is a 214-residue protein sequence, read N- to C-terminus: Adenylate kinase (214 aa).

10 to 15 (GAGKGT) serves as a coordination point for ATP. Positions 30 to 59 (STGDMLRGAIKAGTDLGKQAKTLMDAGQLV) are NMP. AMP contacts are provided by residues Thr-31, Arg-36, 57–59 (QLV), 85–88 (GFPR), and Gln-92. The LID stretch occupies residues 122 to 159 (GRRVHQASGRTYHVVYNPPKVEGKDDVTGEDLIIRADD). Residues Arg-123 and 132 to 133 (TY) each bind ATP. The AMP site is built by Arg-156 and Arg-167. Lys-200 lines the ATP pocket.

The protein belongs to the adenylate kinase family. Monomer.

The protein resides in the cytoplasm. It carries out the reaction AMP + ATP = 2 ADP. It participates in purine metabolism; AMP biosynthesis via salvage pathway; AMP from ADP: step 1/1. Functionally, catalyzes the reversible transfer of the terminal phosphate group between ATP and AMP. Plays an important role in cellular energy homeostasis and in adenine nucleotide metabolism. The polypeptide is Adenylate kinase (Pasteurella multocida (strain Pm70)).